A 491-amino-acid chain; its full sequence is MAMRHLSRSRDVTKRSTKKYIEEPLYNRLFKDGGTEVKVRQQLNQFLKGTKHVFKWEVGDTIKKLRNRGLYYPALKLSEVMEERGMNKTVSDQAIHLDLVAKAREITAGENYFVDLPETSKTELTYGSLLNCYCKELLTEKAEGLLNKMKELNITPSSMSYNSLMTLYTKTGETEKVPAMIQELKAENVMPDSYTYNVWMRALAATNDISGVERVIEEMNRDGRVAPDWTTYSNMASIYVDAGLSQKAEKALQELEMKNTQRDFTAYQFLITLYGRLGKLTEVYRIWRSLRLAIPKTSNVAYLNMIQVLVKLNDLPGAETLFKEWQANCSTYDIRIVNVLIGAYAQEGLIQKANELKEKAPRRGGKLNAKTWEIFMDYYVKSGDMARALECMSKAVSIGKGDGGKWLPSPETVRALMSYFEQKKDVNGAENLLEILKNGTDNIGAEIFEPLIRTYAAAGKSHPAMRRRLKMENVEVNEATKKLLDEVSQDV.

8 PPR repeats span residues 122–156 (TELT…NITP), 157–191 (SSMS…NVMP), 192–226 (DSYT…GRVA), 228–262 (DWTT…NTQR), 263–293 (DFTA…LRLA), 298–328 (SNVA…WQAN), 333–367 (DIRI…GGKL), and 368–402 (NAKT…GKGD).

It belongs to the PPR family. P subfamily. Component of the mitochondrial ribosome large subunit.

It is found in the mitochondrion. This chain is Large ribosomal subunit protein mL101 (rPPR4), found in Arabidopsis thaliana (Mouse-ear cress).